We begin with the raw amino-acid sequence, 585 residues long: tRNA-guanine(15) transglycosylase (585 aa).

D95 acts as the Nucleophile in catalysis. D130 and A196 together coordinate substrate. Positions 279, 281, and 284 each coordinate Zn(2+). The 76-residue stretch at 507–582 (VMRVVVNKEA…RAVKTRRGVE (76 aa)) folds into the PUA domain.

It belongs to the archaeosine tRNA-ribosyltransferase family. The cofactor is Zn(2+).

The enzyme catalyses guanosine(15) in tRNA + 7-cyano-7-deazaguanine = 7-cyano-7-carbaguanosine(15) in tRNA + guanine. It participates in tRNA modification; archaeosine-tRNA biosynthesis. Functionally, exchanges the guanine residue with 7-cyano-7-deazaguanine (preQ0) at position 15 in the dihydrouridine loop (D-loop) of archaeal tRNAs. The protein is tRNA-guanine(15) transglycosylase of Pyrococcus furiosus (strain ATCC 43587 / DSM 3638 / JCM 8422 / Vc1).